Reading from the N-terminus, the 160-residue chain is Ribosomal RNA large subunit methyltransferase H (160 aa).

S-adenosyl-L-methionine contacts are provided by residues Leu-76, Gly-108, and 127–132 (FGFMTW).

It belongs to the RNA methyltransferase RlmH family. In terms of assembly, homodimer.

Its subcellular location is the cytoplasm. It catalyses the reaction pseudouridine(1915) in 23S rRNA + S-adenosyl-L-methionine = N(3)-methylpseudouridine(1915) in 23S rRNA + S-adenosyl-L-homocysteine + H(+). Specifically methylates the pseudouridine at position 1915 (m3Psi1915) in 23S rRNA. The sequence is that of Ribosomal RNA large subunit methyltransferase H from Bartonella tribocorum (strain CIP 105476 / IBS 506).